The following is a 313-amino-acid chain: Ribosomal RNA small subunit methyltransferase H (313 aa).

S-adenosyl-L-methionine is bound by residues 35–37, Asp55, Phe79, Asp100, and Gln107; that span reads GGH.

This sequence belongs to the methyltransferase superfamily. RsmH family.

Its subcellular location is the cytoplasm. It carries out the reaction cytidine(1402) in 16S rRNA + S-adenosyl-L-methionine = N(4)-methylcytidine(1402) in 16S rRNA + S-adenosyl-L-homocysteine + H(+). Functionally, specifically methylates the N4 position of cytidine in position 1402 (C1402) of 16S rRNA. This Burkholderia ambifaria (strain MC40-6) protein is Ribosomal RNA small subunit methyltransferase H.